Reading from the N-terminus, the 446-residue chain is MISGLFIFNLKGDTLICKTFRHDLKKSVTEIFRVAILTNTDYRHPIVSIGSSTYIYTKHEDLYVVAITKGNPNVMIVLEFLESLIQDLTHYFGKLNENTVKDNVSFIFELLDEMIDYGIIQTTEPDALARSVSITAVKKKGNALSLKRSHSSQLAHTTSSEIPGSVPWRRAGIKYRKNSIYIDIVERMNLLISSTGNVLRSDVSGVVKMRAMLSGMPECQFGLNDKLDFKLKQSESKSKSNNSRNPSSVNGGFVILEDCQFHQCVRLPEFENEHRITFIPPDGEVELMSYRSHENINIPFRIVPIVEQLSKQKIIYRISIRADYPHKLSSSLNFRIPVPTNVVKANPRVNRGKAGYEPSENIINWKIPRFLGETELIFYAEVELSNTTNQQIWAKPPISLDFNILMFTSSGLHVQYLRVSEPSNSKYKSIKWVRYSTRAGTCEIRI.

Phosphoserine occurs at positions 145, 151, and 152. Position 157 is a phosphothreonine (T157). Residues 177 to 445 (KNSIYIDIVE…STRAGTCEIR (269 aa)) form the MHD domain.

Belongs to the adaptor complexes medium subunit family. Adaptor protein complex 2 (AP-2) is a heterotetramer composed of two large adaptins (alpha-type subunit apl3 and beta-type subunit apl1), a medium chain (mu-type subunit apm4) and a small adaptin (sigma-type subunit aps2).

Its subcellular location is the cell membrane. It is found in the membrane. The protein resides in the coated pit. In terms of biological role, component of the adaptor complexes which link clathrin to receptors in coated vesicles. Clathrin-associated protein complexes are believed to interact with the cytoplasmic tails of membrane proteins, leading to their selection and concentration. AP50 is a subunit of the plasma membrane adaptor (Potential). This is AP-2 complex subunit mu (apm4) from Schizosaccharomyces pombe (strain 972 / ATCC 24843) (Fission yeast).